We begin with the raw amino-acid sequence, 544 residues long: Chaperonin GroEL 1 (544 aa).

ATP contacts are provided by residues 30-33, lysine 51, 87-91, glycine 415, 481-483, and aspartate 497; these read TLGP, DGTTT, and DAL.

This sequence belongs to the chaperonin (HSP60) family. As to quaternary structure, forms a cylinder of 14 subunits composed of two heptameric rings stacked back-to-back. Interacts with the co-chaperonin GroES.

It is found in the cytoplasm. It carries out the reaction ATP + H2O + a folded polypeptide = ADP + phosphate + an unfolded polypeptide.. Functionally, together with its co-chaperonin GroES, plays an essential role in assisting protein folding. The GroEL-GroES system forms a nano-cage that allows encapsulation of the non-native substrate proteins and provides a physical environment optimized to promote and accelerate protein folding. This chain is Chaperonin GroEL 1, found in Chlamydia pneumoniae (Chlamydophila pneumoniae).